The primary structure comprises 490 residues: Colicin-5 (490 aa).

The span at Met1–Ser20 shows a compositional bias: polar residues. 2 disordered regions span residues Met1–Gly29 and Gln146–Arg171. The segment covering Gln146–Ala170 has biased composition (basic and acidic residues). The helical transmembrane segment at Ile447 to Ile467 threads the bilayer.

Belongs to the channel forming colicin family.

The protein localises to the host membrane. This colicin is a channel-forming colicin. This class of transmembrane toxins depolarize the cytoplasmic membrane, leading to dissipation of cellular energy. Functionally, colicins are polypeptide toxins produced by and active against E.coli and closely related bacteria. The polypeptide is Colicin-5 (cfa) (Escherichia coli).